The primary structure comprises 73 residues: uncharacterized protein (73 aa).

The HTH deoR-type domain occupies 8–63 (MLTRIKSVYMFIQEKGLVTTQELVDEFGITPRTIQRDLNVLAYNDLVHSPSRGKWE). Residues 25–44 (VTTQELVDEFGITPRTIQRD) constitute a DNA-binding region (H-T-H motif).

This is an uncharacterized protein from Bacillus subtilis (strain 168).